We begin with the raw amino-acid sequence, 193 residues long: Large ribosomal subunit protein bL25 (193 aa).

The protein belongs to the bacterial ribosomal protein bL25 family. CTC subfamily. In terms of assembly, part of the 50S ribosomal subunit; part of the 5S rRNA/L5/L18/L25 subcomplex. Contacts the 5S rRNA. Binds to the 5S rRNA independently of L5 and L18.

In terms of biological role, this is one of the proteins that binds to the 5S RNA in the ribosome where it forms part of the central protuberance. This chain is Large ribosomal subunit protein bL25, found in Clostridium tetani (strain Massachusetts / E88).